Reading from the N-terminus, the 400-residue chain is Tryptophan synthase beta chain (400 aa).

Lys-90 is modified (N6-(pyridoxal phosphate)lysine).

It belongs to the TrpB family. Tetramer of two alpha and two beta chains. Requires pyridoxal 5'-phosphate as cofactor.

It carries out the reaction (1S,2R)-1-C-(indol-3-yl)glycerol 3-phosphate + L-serine = D-glyceraldehyde 3-phosphate + L-tryptophan + H2O. It participates in amino-acid biosynthesis; L-tryptophan biosynthesis; L-tryptophan from chorismate: step 5/5. The beta subunit is responsible for the synthesis of L-tryptophan from indole and L-serine. The chain is Tryptophan synthase beta chain (trpB) from Bacillus subtilis (strain 168).